We begin with the raw amino-acid sequence, 356 residues long: D-amino-acid oxidase (356 aa).

Residues 1–17 (MAKIVVIGAGVAGLTTA) form the signal peptide. FAD contacts are provided by alanine 9, serine 44, glycine 48, and asparagine 50. An anthranilate-binding site is contributed by phenylalanine 54. Valine 171 contacts FAD. Asparagine 192 carries N-linked (GlcNAc...) asparagine glycosylation. Position 243 (tyrosine 243) interacts with anthranilate. Residue tyrosine 243 participates in (R)-lactate binding. N-linked (GlcNAc...) asparagine glycosylation is present at asparagine 262. Arginine 302, alanine 329, glycine 332, tyrosine 333, and glutamine 334 together coordinate FAD. Arginine 302 contacts anthranilate. Arginine 302 is a binding site for (R)-lactate.

This sequence belongs to the DAMOX/DASOX family. FAD is required as a cofactor.

It localises to the peroxisome matrix. It catalyses the reaction a D-alpha-amino acid + O2 + H2O = a 2-oxocarboxylate + H2O2 + NH4(+). The enzyme catalyses D-alanine + O2 + H2O = pyruvate + H2O2 + NH4(+). It carries out the reaction D-serine + O2 + H2O = 3-hydroxypyruvate + H2O2 + NH4(+). The catalysed reaction is D-phenylalanine + O2 + H2O = 3-phenylpyruvate + H2O2 + NH4(+). It catalyses the reaction D-lysine + O2 + H2O = 6-amino-2-oxohexanoate + H2O2 + NH4(+). The enzyme catalyses D-tyrosine + O2 + H2O = 3-(4-hydroxyphenyl)pyruvate + H2O2 + NH4(+). It carries out the reaction D-methionine + O2 + H2O = 4-methylsulfanyl-2-oxobutanoate + H2O2 + NH4(+). The catalysed reaction is D-tryptophan + O2 + H2O = indole-3-pyruvate + H2O2 + NH4(+). It catalyses the reaction D-leucine + O2 + H2O = 4-methyl-2-oxopentanoate + H2O2 + NH4(+). The enzyme catalyses D-valine + O2 + H2O = 3-methyl-2-oxobutanoate + H2O2 + NH4(+). Inhibited by benzoate and hypochlorite. Functionally, catalyzes the oxidative deamination of D-amino acids with broad substrate specificity. Enables the organism to utilize D-amino acids as a source of nutrients. The chain is D-amino-acid oxidase from Trigonopsis variabilis (Yeast).